Reading from the N-terminus, the 202-residue chain is N-(5'-phosphoribosyl)anthranilate isomerase (202 aa).

Belongs to the TrpF family.

The enzyme catalyses N-(5-phospho-beta-D-ribosyl)anthranilate = 1-(2-carboxyphenylamino)-1-deoxy-D-ribulose 5-phosphate. It functions in the pathway amino-acid biosynthesis; L-tryptophan biosynthesis; L-tryptophan from chorismate: step 3/5. The chain is N-(5'-phosphoribosyl)anthranilate isomerase from Listeria monocytogenes serotype 4a (strain HCC23).